A 75-amino-acid chain; its full sequence is Cytochrome c oxidase subunit 6C (75 aa).

At 1–13 the chain is on the mitochondrial matrix side; sequence MAPEVLPKPQMRG. A helical membrane pass occupies residues 14-54; it reads LLAKRLRFHMVTAFVLSLGVAALYKFRVADKRKKAYADFYR. The Mitochondrial intermembrane segment spans residues 55–75; sequence NYDAMKDFEEMRKAGIFQSVK.

This sequence belongs to the cytochrome c oxidase subunit 6c family. Component of the cytochrome c oxidase (complex IV, CIV), a multisubunit enzyme composed of 14 subunits. The complex is composed of a catalytic core of 3 subunits MT-CO1, MT-CO2 and MT-CO3, encoded in the mitochondrial DNA, and 11 supernumerary subunits COX4I, COX5A, COX5B, COX6A, COX6B, COX6C, COX7A, COX7B, COX7C, COX8 and NDUFA4, which are encoded in the nuclear genome. The complex exists as a monomer or a dimer and forms supercomplexes (SCs) in the inner mitochondrial membrane with NADH-ubiquinone oxidoreductase (complex I, CI) and ubiquinol-cytochrome c oxidoreductase (cytochrome b-c1 complex, complex III, CIII), resulting in different assemblies (supercomplex SCI(1)III(2)IV(1) and megacomplex MCI(2)III(2)IV(2)).

The protein resides in the mitochondrion inner membrane. It participates in energy metabolism; oxidative phosphorylation. Component of the cytochrome c oxidase, the last enzyme in the mitochondrial electron transport chain which drives oxidative phosphorylation. The respiratory chain contains 3 multisubunit complexes succinate dehydrogenase (complex II, CII), ubiquinol-cytochrome c oxidoreductase (cytochrome b-c1 complex, complex III, CIII) and cytochrome c oxidase (complex IV, CIV), that cooperate to transfer electrons derived from NADH and succinate to molecular oxygen, creating an electrochemical gradient over the inner membrane that drives transmembrane transport and the ATP synthase. Cytochrome c oxidase is the component of the respiratory chain that catalyzes the reduction of oxygen to water. Electrons originating from reduced cytochrome c in the intermembrane space (IMS) are transferred via the dinuclear copper A center (CU(A)) of subunit 2 and heme A of subunit 1 to the active site in subunit 1, a binuclear center (BNC) formed by heme A3 and copper B (CU(B)). The BNC reduces molecular oxygen to 2 water molecules using 4 electrons from cytochrome c in the IMS and 4 protons from the mitochondrial matrix. The protein is Cytochrome c oxidase subunit 6C (COX6C) of Trachypithecus cristatus (Silvered leaf-monkey).